Consider the following 617-residue polypeptide: Protein fem-1 homolog C (617 aa).

At Met1 the chain carries N-acetylmethionine. ANK repeat units follow at residues 2–31, 40–70, 82–111, 115–144, 148–177, 181–210, and 213–242; these read DLKT…KEEV, NGAT…SIEV, EGAP…SVNN, TNST…DLEV, HGHT…DVNR, KGNT…KMEK, and YGMT…TSKT. TPR repeat units lie at residues 245–279 and 338–371; these read INAL…RYSD and SYYI…QQSN. ANK repeat units follow at residues 481–523 and 527–556; these read NNFS…DVNV and DDNS…HFDA.

Belongs to the fem-1 family. In terms of assembly, component of a Cul2-RING (CRL2) E3 ubiquitin-protein ligase complex, also named ECS (Elongin BC-CUL2/5-SOCS-box protein) complex, composed of CUL2, Elongin BC (ELOB and ELOC), RBX1 and substrate-specific adapter FEM1C. In terms of tissue distribution, widely expressed. Highly expressed in kidney, cardiac tissue, skeletal muscle and testis. Expressed at lower levels in other tissues, including cartilage.

Its pathway is protein modification; protein ubiquitination. Functionally, substrate-recognition component of a Cul2-RING (CRL2) E3 ubiquitin-protein ligase complex of the DesCEND (destruction via C-end degrons) pathway, which recognizes a C-degron located at the extreme C terminus of target proteins, leading to their ubiquitination and degradation. The C-degron recognized by the DesCEND pathway is usually a motif of less than ten residues and can be present in full-length proteins, truncated proteins or proteolytically cleaved forms. The CRL2(FEM1C) complex specifically recognizes proteins with an arginine at the C-terminus: recognizes and binds proteins ending with -Lys/Arg-Xaa-Arg and -Lys/Arg-Xaa-Xaa-Arg C-degrons, such as SIL1 or OR51B2, leading to their ubiquitination and degradation. The CRL2(FEM1C) complex mediates ubiquitination and degradation of truncated MSRB1/SEPX1 selenoproteins produced by failed UGA/Sec decoding. Promotes ubiquitination and degradation of SLBP. The polypeptide is Protein fem-1 homolog C (Homo sapiens (Human)).